A 329-amino-acid polypeptide reads, in one-letter code: Malate dehydrogenase (329 aa).

12-18 contacts NAD(+); the sequence is GAAGQIC. The substrate site is built by Arg-95 and Arg-101. NAD(+)-binding positions include Asn-108, Gln-115, and 132-134; that span reads VGN. Substrate-binding residues include Asn-134 and Arg-165. Residue His-190 is the Proton acceptor of the active site.

This sequence belongs to the LDH/MDH superfamily. MDH type 2 family. As to quaternary structure, homodimer.

The catalysed reaction is (S)-malate + NAD(+) = oxaloacetate + NADH + H(+). Its function is as follows. Catalyzes the reversible oxidation of malate to oxaloacetate. The chain is Malate dehydrogenase from Aquaspirillum arcticum.